The sequence spans 400 residues: Renin (400 aa).

The N-terminal stretch at 1 to 17 is a signal peptide; it reads MPLWGLLLALWGCSTFS. Residues 18–59 constitute a propeptide, activation peptide; the sequence is LPADTAAFRRIFLKKMPSVRESLKERGVDMAQLGAEWSQLTK. N-linked (GlcNAc...) asparagine glycosylation is present at N65. A Peptidase A1 domain is found at 80–397; the sequence is YYGEIGIGTP…DRRNNRIGFA (318 aa). Residue D98 is part of the active site. A disulfide bridge connects residues C111 and C118. N135 carries an N-linked (GlcNAc...) asparagine glycan. Cysteines 277 and 281 form a disulfide. Residue D286 is part of the active site. C320 and C356 form a disulfide bridge. Residue N353 is glycosylated (N-linked (GlcNAc...) asparagine).

It belongs to the peptidase A1 family. In terms of assembly, interacts with ATP6AP2. Kidney.

The protein resides in the secreted. The protein localises to the membrane. It carries out the reaction Cleavage of Leu-|-Xaa bond in angiotensinogen to generate angiotensin I.. Interaction with ATP6AP2 results in a 5-fold increased efficiency in angiotensinogen processing. Renin is a highly specific endopeptidase, whose only known function is to generate angiotensin I from angiotensinogen in the plasma, initiating a cascade of reactions that produce an elevation of blood pressure and increased sodium retention by the kidney. The chain is Renin (REN) from Ovis aries (Sheep).